The following is a 244-amino-acid chain: Glucosamine-6-phosphate deaminase (244 aa).

D67 acts as the Proton acceptor; for enolization step in catalysis. The For ring-opening step role is filled by N133. The active-site Proton acceptor; for ring-opening step is the H135. Residue E140 is the For ring-opening step of the active site.

The protein belongs to the glucosamine/galactosamine-6-phosphate isomerase family. NagB subfamily.

It carries out the reaction alpha-D-glucosamine 6-phosphate + H2O = beta-D-fructose 6-phosphate + NH4(+). The protein operates within amino-sugar metabolism; N-acetylneuraminate degradation; D-fructose 6-phosphate from N-acetylneuraminate: step 5/5. Functionally, catalyzes the reversible isomerization-deamination of glucosamine 6-phosphate (GlcN6P) to form fructose 6-phosphate (Fru6P) and ammonium ion. This Mycoplasma mycoides subsp. mycoides SC (strain CCUG 32753 / NCTC 10114 / PG1) protein is Glucosamine-6-phosphate deaminase.